A 145-amino-acid chain; its full sequence is RxLR effector protein BLR40 (145 aa).

Positions Met1 to Thr22 are cleaved as a signal peptide. Residues Arg44 to Arg58 carry the RxLR-dEER motif.

Belongs to the RxLR effector family.

It is found in the secreted. The protein localises to the host cell membrane. Functionally, secreted effector that triggers a robust hypersensitive response (HR) in Lactuca sativa cv. Design that is resistant to multiple B.lactucae races, including Bl:24. This is RxLR effector protein BLR40 from Bremia lactucae (Lettuce downy mildew).